A 1026-amino-acid polypeptide reads, in one-letter code: Vacuolar protein sorting-associated protein 18 homolog (1026 aa).

Positions 858-896 (IVDFLKRNKQRLEKLERSMKEATEIASEIRDKQEKLKNR) form a coiled coil. The RING-type; degenerate zinc-finger motif lies at 906–932 (CSHCARPISGRAFNVHSCRHFFHRECL).

Probable core component of at least two putative endosomal tethering complexes, the homotypic fusion and vacuole protein sorting (HOPS) complex and the class C core vacuole/endosome tethering (CORVET) complex. Their common core is composed of the class C Vps proteins vps-11, vps-16 and vps-18, which in HOPS further associates with vps-33.1, vps-39 and vps-41 and in CORVET with vps-8 and vps-33.2. In hermaphrodites, expressed in coelomocytes and gonadal sheath cells.

It is found in the cytoplasm. The protein resides in the late endosome membrane. It localises to the lysosome membrane. The protein localises to the early endosome. Its subcellular location is the cytoplasmic vesicle. It is found in the autophagosome. The protein resides in the clathrin-coated vesicle. In terms of biological role, plays a role in vesicle-mediated protein trafficking to lysosomal compartments including the endocytic membrane transport and autophagic pathways. Believed to act as a core component of the putative HOPS and CORVET endosomal tethering complexes which are proposed to be involved in the rab-5-to-rab-7 endosome conversion probably implicating sand-1, and via binding SNAREs and SNARE complexes to mediate tethering and docking events during SNARE-mediated membrane fusion. The HOPS complex is proposed to be recruited to rab-7 on the late endosomal membrane and to regulate late endocytic, phagocytic and autophagic traffic towards lysosomes. Within the HOPS complex, contributes to the normal development of gut granules in intestinal cells of the embryo, and also promotes the trafficking of embryonic intestinal gut granules away from lysosomes. The CORVET complex is proposed to function as a rab-5 effector to mediate early endosome fusion probably in specific endosome subpopulations. Required for fusion of endosomes and autophagosomes with lysosomes. Plays a role in the degradation of apoptotic cells during programmed cell death. The chain is Vacuolar protein sorting-associated protein 18 homolog from Caenorhabditis elegans.